We begin with the raw amino-acid sequence, 2381 residues long: Myb-like protein U (2381 aa).

4 disordered regions span residues methionine 1–asparagine 85, serine 148–serine 167, proline 178–asparagine 492, and asparagine 641–methionine 696. Composition is skewed to low complexity over residues serine 30–serine 41 and threonine 64–threonine 79. Composition is skewed to low complexity over residues asparagine 192–serine 204, glutamate 225–serine 261, and serine 291–lysine 315. Positions serine 331–leucine 343 are enriched in acidic residues. The segment covering threonine 363–serine 405 has biased composition (low complexity). The segment covering serine 421 to lysine 430 has biased composition (polar residues). Low complexity-rich tracts occupy residues glutamine 435–asparagine 492 and asparagine 641–asparagine 692. Positions tryptophan 856–arginine 899 constitute a Myb-like domain. Disordered regions lie at residues lysine 932–proline 1024, isoleucine 1068–proline 1093, threonine 1145–glutamate 1207, serine 1295–aspartate 1339, proline 1422–proline 1474, proline 1597–valine 1647, proline 1667–valine 1849, threonine 1961–alanine 1985, threonine 2055–threonine 2106, and leucine 2122–aspartate 2280. Residues asparagine 936 to glycine 953 show a composition bias toward low complexity. A compositionally biased stretch (basic residues) spans valine 982 to arginine 995. A compositionally biased stretch (polar residues) spans alanine 1000–proline 1013. Composition is skewed to low complexity over residues asparagine 1069–asparagine 1092, threonine 1145–alanine 1186, valine 1195–asparagine 1205, and threonine 1306–glutamine 1325. Over residues leucine 1326–proline 1337 the composition is skewed to pro residues. Over residues proline 1427 to proline 1474 the composition is skewed to low complexity. A compositionally biased stretch (pro residues) spans proline 1597–proline 1606. Residues serine 1618–serine 1637 show a composition bias toward low complexity. 2 stretches are compositionally biased toward polar residues: residues threonine 1638–valine 1647 and glutamine 1671–leucine 1701. Composition is skewed to low complexity over residues proline 1702 to serine 1735 and threonine 1743 to proline 1809. Residues alanine 1829 to threonine 1844 are compositionally biased toward polar residues. Composition is skewed to low complexity over residues threonine 1961–threonine 1970 and asparagine 2065–threonine 2097. The span at asparagine 2129–proline 2138 shows a compositional bias: polar residues. Residues proline 2154–proline 2209 are compositionally biased toward low complexity. A compositionally biased stretch (basic and acidic residues) spans lysine 2210–lysine 2278.

This is Myb-like protein U (mybU) from Dictyostelium discoideum (Social amoeba).